The primary structure comprises 202 residues: Ras-related protein RABD2c (202 aa).

Residues Gly15–Cys23, Tyr33–Thr40, Asp63–Gln67, Asn121–Asp124, and Ser151–Lys153 contribute to the GTP site. The Effector region signature appears at Tyr37–Phe45. The segment at Ala174–Ser202 is disordered. Residues Pro192–Ser202 show a composition bias toward polar residues. 2 S-geranylgeranyl cysteine lipidation sites follow: Cys199 and Cys200.

This sequence belongs to the small GTPase superfamily. Rab family.

Its subcellular location is the cell membrane. It localises to the golgi apparatus. The protein localises to the trans-Golgi network membrane. The protein resides in the golgi apparatus membrane. Its function is as follows. Protein transport. Regulator of membrane traffic from the Golgi apparatus towards the endoplasmic reticulum (ER). The chain is Ras-related protein RABD2c (RABD2C) from Arabidopsis thaliana (Mouse-ear cress).